Consider the following 483-residue polypeptide: Probable cytosol aminopeptidase (483 aa).

Mn(2+)-binding residues include lysine 252 and aspartate 257. Lysine 264 is a catalytic residue. Residues aspartate 275, aspartate 334, and glutamate 336 each contribute to the Mn(2+) site. The active site involves arginine 338.

The protein belongs to the peptidase M17 family. Mn(2+) serves as cofactor.

Its subcellular location is the cytoplasm. It carries out the reaction Release of an N-terminal amino acid, Xaa-|-Yaa-, in which Xaa is preferably Leu, but may be other amino acids including Pro although not Arg or Lys, and Yaa may be Pro. Amino acid amides and methyl esters are also readily hydrolyzed, but rates on arylamides are exceedingly low.. It catalyses the reaction Release of an N-terminal amino acid, preferentially leucine, but not glutamic or aspartic acids.. Its function is as follows. Presumably involved in the processing and regular turnover of intracellular proteins. Catalyzes the removal of unsubstituted N-terminal amino acids from various peptides. The protein is Probable cytosol aminopeptidase of Legionella pneumophila (strain Corby).